A 98-amino-acid chain; its full sequence is MSQGHRSEEVVRVNLLFFAKSRELVGTSSLDNFPLATSGGHLSGSAVLGTICERFPELVAIRDSVIIAHNEQYCEDLTEPISLADGDEIAVIPPIAGG.

The residue at position 98 (glycine 98) is a 1-thioglycine; alternate. Glycine 98 carries the glycyl adenylate; alternate modification.

Belongs to the MoaD family. MOCS2A subfamily. In terms of assembly, heterotetramer; composed of 2 small (MOCS2A) and 2 large (MOCS2B) subunits. Post-translationally, C-terminal thiocarboxylation occurs in 2 steps, it is first acyl-adenylated (-COAMP) via the hesA/moeB/thiF part of MOCS3, then thiocarboxylated (-COSH) via the rhodanese domain of MOCS3.

Its subcellular location is the cytoplasm. It functions in the pathway cofactor biosynthesis; molybdopterin biosynthesis. Its function is as follows. Acts as a sulfur carrier required for molybdopterin biosynthesis. Component of the molybdopterin synthase complex that catalyzes the conversion of precursor Z into molybdopterin by mediating the incorporation of 2 sulfur atoms into precursor Z to generate a dithiolene group. In the complex, serves as sulfur donor by being thiocarboxylated (-COSH) at its C-terminus by MOCS3. After interaction with MOCS2B, the sulfur is then transferred to precursor Z to form molybdopterin. The sequence is that of Molybdopterin synthase sulfur carrier subunit from Aedes aegypti (Yellowfever mosquito).